The following is a 636-amino-acid chain: PTS system beta-glucoside-specific EIIBCA component (636 aa).

The 86-residue stretch at Met-1 to Ala-86 folds into the PTS EIIB type-1 domain. Cys-26 acts as the Phosphocysteine intermediate; for EIIB activity in catalysis. Helical transmembrane passes span Ile-104–Ile-124, Leu-146–Ala-166, Ala-172–Leu-192, Phe-215–Ala-235, Leu-258–Ile-278, Ile-299–Trp-319, Val-337–Leu-357, Val-369–Leu-389, Ala-407–Ile-427, and Ile-444–Leu-464. Positions Asp-105–Thr-476 constitute a PTS EIIC type-1 domain. Residues Glu-472–Ser-492 are disordered. In terms of domain architecture, PTS EIIA type-1 spans Asp-506–Asn-610. Residue His-558 is the Tele-phosphohistidine intermediate; for EIIA activity of the active site.

It is found in the cell membrane. The phosphoenolpyruvate-dependent sugar phosphotransferase system (sugar PTS), a major carbohydrate active -transport system, catalyzes the phosphorylation of incoming sugar substrates concomitantly with their translocation across the cell membrane. This system is involved in beta-glucoside transport. This Halalkalibacterium halodurans (strain ATCC BAA-125 / DSM 18197 / FERM 7344 / JCM 9153 / C-125) (Bacillus halodurans) protein is PTS system beta-glucoside-specific EIIBCA component (bglP).